The primary structure comprises 365 residues: Bifunctional chorismate mutase/prephenate dehydratase (365 aa).

The 96-residue stretch at 1 to 96 (MSEADQLKAL…SCLALEQPLR (96 aa)) folds into the Chorismate mutase domain. Residues Arg-11, Arg-28, Lys-39, and Glu-57 each coordinate substrate. Residues 97 to 272 (VAYLGPEGTF…NSTRFLIIGS (176 aa)) form the Prephenate dehydratase domain. The ACT domain occupies 284–361 (SIIVSMRNKP…VALKVLGSYP (78 aa)).

The protein localises to the cytoplasm. It catalyses the reaction chorismate = prephenate. It carries out the reaction prephenate + H(+) = 3-phenylpyruvate + CO2 + H2O. It functions in the pathway amino-acid biosynthesis; L-phenylalanine biosynthesis; phenylpyruvate from prephenate: step 1/1. Its pathway is metabolic intermediate biosynthesis; prephenate biosynthesis; prephenate from chorismate: step 1/1. In terms of biological role, catalyzes the Claisen rearrangement of chorismate to prephenate and the decarboxylation/dehydration of prephenate to phenylpyruvate. The protein is Bifunctional chorismate mutase/prephenate dehydratase of Stutzerimonas stutzeri (Pseudomonas stutzeri).